Consider the following 274-residue polypeptide: NH(3)-dependent NAD(+) synthetase (274 aa).

46–53 (GISGGQDS) serves as a coordination point for ATP. Asp-52 contributes to the Mg(2+) binding site. Residue Arg-140 coordinates deamido-NAD(+). Thr-160 lines the ATP pocket. Glu-165 contributes to the Mg(2+) binding site. Positions 173 and 180 each coordinate deamido-NAD(+). The ATP site is built by Lys-189 and Thr-211. 260–261 (HK) serves as a coordination point for deamido-NAD(+).

It belongs to the NAD synthetase family. Homodimer.

The catalysed reaction is deamido-NAD(+) + NH4(+) + ATP = AMP + diphosphate + NAD(+) + H(+). It participates in cofactor biosynthesis; NAD(+) biosynthesis; NAD(+) from deamido-NAD(+) (ammonia route): step 1/1. Its function is as follows. Catalyzes the ATP-dependent amidation of deamido-NAD to form NAD. Uses ammonia as a nitrogen source. This is NH(3)-dependent NAD(+) synthetase from Streptococcus mutans serotype c (strain ATCC 700610 / UA159).